The sequence spans 335 residues: ATP-dependent 6-phosphofructokinase (335 aa).

An ATP-binding site is contributed by glycine 11. 21–25 (RAVVR) is a binding site for ADP. ATP contacts are provided by residues 72–73 (RY) and 102–105 (GDGS). Aspartate 103 contacts Mg(2+). Residue 125–127 (TID) participates in substrate binding. Aspartate 127 acts as the Proton acceptor in catalysis. Residue arginine 154 coordinates ADP. Residues arginine 162 and 169–171 (MGR) contribute to the substrate site. Residues 185 to 187 (GAD) and 213 to 215 (KKH) each bind ADP. Substrate contacts are provided by residues glutamate 222, arginine 244, and 250-253 (HIQR).

It belongs to the phosphofructokinase type A (PFKA) family. ATP-dependent PFK group I subfamily. Prokaryotic clade 'B1' sub-subfamily. As to quaternary structure, homotetramer. The cofactor is Mg(2+).

It is found in the cytoplasm. The catalysed reaction is beta-D-fructose 6-phosphate + ATP = beta-D-fructose 1,6-bisphosphate + ADP + H(+). It participates in carbohydrate degradation; glycolysis; D-glyceraldehyde 3-phosphate and glycerone phosphate from D-glucose: step 3/4. Allosterically activated by ADP and other diphosphonucleosides, and allosterically inhibited by phosphoenolpyruvate. Catalyzes the phosphorylation of D-fructose 6-phosphate to fructose 1,6-bisphosphate by ATP, the first committing step of glycolysis. The polypeptide is ATP-dependent 6-phosphofructokinase (Streptococcus pneumoniae (strain ATCC BAA-255 / R6)).